The primary structure comprises 401 residues: Nicotinate phosphoribosyltransferase (401 aa).

Phosphohistidine; by autocatalysis is present on H221.

This sequence belongs to the NAPRTase family. Post-translationally, transiently phosphorylated on a His residue during the reaction cycle. Phosphorylation strongly increases the affinity for substrates and increases the rate of nicotinate D-ribonucleotide production. Dephosphorylation regenerates the low-affinity form of the enzyme, leading to product release.

It catalyses the reaction nicotinate + 5-phospho-alpha-D-ribose 1-diphosphate + ATP + H2O = nicotinate beta-D-ribonucleotide + ADP + phosphate + diphosphate. It functions in the pathway cofactor biosynthesis; NAD(+) biosynthesis; nicotinate D-ribonucleotide from nicotinate: step 1/1. Functionally, catalyzes the synthesis of beta-nicotinate D-ribonucleotide from nicotinate and 5-phospho-D-ribose 1-phosphate at the expense of ATP. The chain is Nicotinate phosphoribosyltransferase from Serratia proteamaculans (strain 568).